The following is a 189-amino-acid chain: Phosphoheptose isomerase (189 aa).

Residues 34–189 (LVAALKGGKK…CDLVEKGLFK (156 aa)) form the SIS domain. 49-51 (NGG) contributes to the substrate binding site. The Zn(2+) site is built by H58 and E62. Substrate-binding positions include E62, 91-92 (ND), 117-119 (STS), S122, and Q169. Q169 and H177 together coordinate Zn(2+).

It belongs to the SIS family. GmhA subfamily. As to quaternary structure, homotetramer. The cofactor is Zn(2+).

It is found in the cytoplasm. The enzyme catalyses 2 D-sedoheptulose 7-phosphate = D-glycero-alpha-D-manno-heptose 7-phosphate + D-glycero-beta-D-manno-heptose 7-phosphate. Its pathway is carbohydrate biosynthesis; D-glycero-D-manno-heptose 7-phosphate biosynthesis; D-glycero-alpha-D-manno-heptose 7-phosphate and D-glycero-beta-D-manno-heptose 7-phosphate from sedoheptulose 7-phosphate: step 1/1. Catalyzes the isomerization of sedoheptulose 7-phosphate in D-glycero-D-manno-heptose 7-phosphate. The protein is Phosphoheptose isomerase of Geobacter metallireducens (strain ATCC 53774 / DSM 7210 / GS-15).